The chain runs to 253 residues: LexA repressor (253 aa).

A disordered region spans residues 1–33 (MTSQGRGTRRGGARGNVRAFPENPADAAGLTPR). The segment at residues 54–74 (VREIGEAVGLTSTSSVAHQLK) is a DNA-binding region (H-T-H motif). Active-site for autocatalytic cleavage activity residues include S177 and K214.

It belongs to the peptidase S24 family. In terms of assembly, homodimer.

It carries out the reaction Hydrolysis of Ala-|-Gly bond in repressor LexA.. In terms of biological role, represses a number of genes involved in the response to DNA damage (SOS response), including recA and lexA. In the presence of single-stranded DNA, RecA interacts with LexA causing an autocatalytic cleavage which disrupts the DNA-binding part of LexA, leading to derepression of the SOS regulon and eventually DNA repair. This chain is LexA repressor, found in Frankia alni (strain DSM 45986 / CECT 9034 / ACN14a).